The primary structure comprises 225 residues: Transmembrane protein 40 (225 aa).

N-acetylmethionine is present on methionine 1. Residues 1 to 14 are compositionally biased toward low complexity; that stretch reads MEASGSSSQSQDSG. The interval 1–96 is disordered; the sequence is MEASGSSSQS…RRDSLRGADH (96 aa). A compositionally biased stretch (basic and acidic residues) spans 15 to 29; that stretch reads GVHRETEDHYQETEL. Basic residues predominate over residues 30-39; sequence HKHHGKARER. Residues 46–68 are compositionally biased toward low complexity; it reads SSSSSSSSSSSSSSSSSSSSSSD. Residues 78-87 show a composition bias toward basic residues; the sequence is GPRKHRRRPR. Phosphoserine is present on serine 129. 2 consecutive transmembrane segments (helical) span residues 152-172 and 179-199; these read FFHFVLLCFAIGALLVCYHYY and LGVGLLTFASLETIGIYFGLV.

It is found in the membrane. This is Transmembrane protein 40 (Tmem40) from Mus musculus (Mouse).